Consider the following 288-residue polypeptide: UTP--glucose-1-phosphate uridylyltransferase (288 aa).

This sequence belongs to the UDPGP type 2 family.

It catalyses the reaction alpha-D-glucose 1-phosphate + UTP + H(+) = UDP-alpha-D-glucose + diphosphate. Its pathway is glycolipid metabolism; diglucosyl-diacylglycerol biosynthesis. Its function is as follows. Catalyzes the formation of UDP-glucose from glucose-1-phosphate and UTP. This is an intermediate step in the biosynthesis of diglucosyl-diacylglycerol (Glc2-DAG), i.e. the predominant glycolipid found in the S.aureus membrane, which is also used as a membrane anchor for lipoteichoic acid (LTA). The polypeptide is UTP--glucose-1-phosphate uridylyltransferase (gtaB) (Staphylococcus aureus (strain bovine RF122 / ET3-1)).